The primary structure comprises 309 residues: Electron transfer flavoprotein subunit alpha (309 aa).

FAD is bound at residue 253–281 (LYIAVGISGAIQHLAGMKDSKVIVAINKD).

The protein belongs to the ETF alpha-subunit/FixB family. Heterodimer of an alpha and a beta subunit. FAD serves as cofactor.

Its function is as follows. The electron transfer flavoprotein serves as a specific electron acceptor for other dehydrogenases. It transfers the electrons to the main respiratory chain via ETF-ubiquinone oxidoreductase (ETF dehydrogenase). This Pseudomonas aeruginosa (strain ATCC 15692 / DSM 22644 / CIP 104116 / JCM 14847 / LMG 12228 / 1C / PRS 101 / PAO1) protein is Electron transfer flavoprotein subunit alpha (etfA).